The chain runs to 512 residues: Kynurenine 3-monooxygenase (512 aa).

The protein belongs to the aromatic-ring hydroxylase family. KMO subfamily. FAD serves as cofactor.

Its subcellular location is the mitochondrion outer membrane. The catalysed reaction is L-kynurenine + NADPH + O2 + H(+) = 3-hydroxy-L-kynurenine + NADP(+) + H2O. It participates in cofactor biosynthesis; NAD(+) biosynthesis; quinolinate from L-kynurenine: step 1/3. Catalyzes the hydroxylation of L-kynurenine (L-Kyn) to form 3-hydroxy-L-kynurenine (L-3OHKyn). Required for synthesis of quinolinic acid. The chain is Kynurenine 3-monooxygenase (bna4) from Aspergillus clavatus (strain ATCC 1007 / CBS 513.65 / DSM 816 / NCTC 3887 / NRRL 1 / QM 1276 / 107).